The following is a 729-amino-acid chain: Fatty acid oxidation complex subunit alpha (729 aa).

The enoyl-CoA hydratase/isomerase stretch occupies residues 1-189 (MLYKGDTLYL…KIGLVDGVVK (189 aa)). Aspartate 296 contacts substrate. A 3-hydroxyacyl-CoA dehydrogenase region spans residues 311-729 (ETPKQAAVLG…ARPVGDLKTA (419 aa)). Residues methionine 324, aspartate 343, 400–402 (VVE), lysine 407, and serine 429 each bind NAD(+). Histidine 450 (for 3-hydroxyacyl-CoA dehydrogenase activity) is an active-site residue. Asparagine 453 provides a ligand contact to NAD(+). Residues asparagine 500 and tyrosine 660 each contribute to the substrate site. The interval 707 to 729 (ARHNEPYYPPVEPARPVGDLKTA) is disordered.

In the N-terminal section; belongs to the enoyl-CoA hydratase/isomerase family. It in the C-terminal section; belongs to the 3-hydroxyacyl-CoA dehydrogenase family. Heterotetramer of two alpha chains (FadB) and two beta chains (FadA).

The enzyme catalyses a (3S)-3-hydroxyacyl-CoA + NAD(+) = a 3-oxoacyl-CoA + NADH + H(+). It catalyses the reaction a (3S)-3-hydroxyacyl-CoA = a (2E)-enoyl-CoA + H2O. The catalysed reaction is a 4-saturated-(3S)-3-hydroxyacyl-CoA = a (3E)-enoyl-CoA + H2O. It carries out the reaction (3S)-3-hydroxybutanoyl-CoA = (3R)-3-hydroxybutanoyl-CoA. The enzyme catalyses a (3Z)-enoyl-CoA = a 4-saturated (2E)-enoyl-CoA. It catalyses the reaction a (3E)-enoyl-CoA = a 4-saturated (2E)-enoyl-CoA. The protein operates within lipid metabolism; fatty acid beta-oxidation. Functionally, involved in the aerobic and anaerobic degradation of long-chain fatty acids via beta-oxidation cycle. Catalyzes the formation of 3-oxoacyl-CoA from enoyl-CoA via L-3-hydroxyacyl-CoA. It can also use D-3-hydroxyacyl-CoA and cis-3-enoyl-CoA as substrate. This chain is Fatty acid oxidation complex subunit alpha, found in Escherichia coli O6:K15:H31 (strain 536 / UPEC).